A 452-amino-acid chain; its full sequence is Phosphoglucosamine mutase (452 aa).

The active-site Phosphoserine intermediate is the serine 98. The Mg(2+) site is built by serine 98, aspartate 239, aspartate 241, and aspartate 243. At serine 98 the chain carries Phosphoserine.

Belongs to the phosphohexose mutase family. The cofactor is Mg(2+). Post-translationally, activated by phosphorylation.

It carries out the reaction alpha-D-glucosamine 1-phosphate = D-glucosamine 6-phosphate. Catalyzes the conversion of glucosamine-6-phosphate to glucosamine-1-phosphate. The chain is Phosphoglucosamine mutase from Anaplasma marginale (strain Florida).